Here is a 913-residue protein sequence, read N- to C-terminus: Transient receptor potential cation channel protein painless (913 aa).

The Cytoplasmic segment spans residues 1–490 (MDFNNCGFID…SSFLFLKWHR (490 aa)). 3 ANK repeats span residues 154 to 189 (GEFT…DIDS), 260 to 289 (EYFG…DINS), and 368 to 397 (GRLV…YIGS). A helical membrane pass occupies residues 491–511 (LSVIFYLNFLIYSLFTASIIT). At 512-523 (YTLLKFHESDQR) the chain is on the extracellular side. A helical membrane pass occupies residues 524–544 (ALTAFFGLLSWLGISYLILRE). Topologically, residues 545–555 (CIQWIMSPVRY) are cytoplasmic. The helical transmembrane segment at 556-576 (FWSITNIMEVALITLSIFTCM) threads the bilayer. Over 577-586 (ESSFDKETQR) the chain is Extracellular. Residues 587 to 607 (VLAVFTILLVSMEFCLLVGSL) traverse the membrane as a helical segment. Residues 608-628 (PVLSISTHMLMLREVSNSFLK) lie on the Cytoplasmic side of the membrane. Residues 629–649 (SFTLYSIFVLTFSLCFYILFG) traverse the membrane as a helical segment. Residues 650–708 (KSVEEDQSKSATPCPPLGKKEGKDEEQGFNTFTKPIEAVIKTIVMLTGEFDAGSIQFTS) lie on the Extracellular side of the membrane. The tract at residues 656–675 (QSKSATPCPPLGKKEGKDEE) is disordered. A helical membrane pass occupies residues 709 to 729 (IYTYLIFLLFVIFMTIVLFNL). At 730–913 (LNGLAVSDTQ…QLIQLVQDRK (184 aa)) the chain is on the cytoplasmic side.

The protein belongs to the transient receptor (TC 1.A.4) family. In terms of tissue distribution, present in multidendritic neurons, chordotonal neurons, a subset of cells in the central nervous system and a subset of sensory neurons in the antennal-maxillary complex. Not detected in gonads and dorsal vessels (at protein level). Expressed in peripheral neurons that extend multiple branched dendrites beneath the larval epidermis, similar to vertebrate pain receptors.

Its subcellular location is the membrane. Functionally, receptor-activated non-selective cation channel involved in detection of pain sensation due to high temperature. Involved in heat nociception by being activated by noxious temperature of 38 degrees Celsius. The protein is Transient receptor potential cation channel protein painless (pain) of Drosophila melanogaster (Fruit fly).